Reading from the N-terminus, the 50-residue chain is Temporin-SHb (50 aa).

Positions 1–10 are cleaved as a signal peptide; it reads FLGTINLSLC. The propeptide occupies 11–35; it reads EQERDADEEERRDEPDESDVEVEKR. Residues 12-31 form a disordered region; sequence QERDADEEERRDEPDESDVE. Residues 14 to 30 are compositionally biased toward acidic residues; it reads RDADEEERRDEPDESDV. A Leucine amide modification is found at leucine 48.

This sequence belongs to the frog skin active peptide (FSAP) family. Temporin subfamily. Expressed by the skin glands.

It is found in the secreted. Functionally, amphipathic alpha-helical peptide with no antimicrobial activity. Does not display anti-leishmania activity. Does not show hemolytic activity (LC(50)&gt;116 uM). This chain is Temporin-SHb, found in Pelophylax saharicus (Sahara frog).